A 417-amino-acid chain; its full sequence is Gamma-glutamyl phosphate reductase (417 aa).

The protein belongs to the gamma-glutamyl phosphate reductase family.

The protein localises to the cytoplasm. It catalyses the reaction L-glutamate 5-semialdehyde + phosphate + NADP(+) = L-glutamyl 5-phosphate + NADPH + H(+). It participates in amino-acid biosynthesis; L-proline biosynthesis; L-glutamate 5-semialdehyde from L-glutamate: step 2/2. Functionally, catalyzes the NADPH-dependent reduction of L-glutamate 5-phosphate into L-glutamate 5-semialdehyde and phosphate. The product spontaneously undergoes cyclization to form 1-pyrroline-5-carboxylate. The polypeptide is Gamma-glutamyl phosphate reductase (Meiothermus ruber).